Here is a 336-residue protein sequence, read N- to C-terminus: Ribosomal RNA small subunit methyltransferase C (336 aa).

This sequence belongs to the methyltransferase superfamily. RsmC family. Monomer.

It is found in the cytoplasm. The enzyme catalyses guanosine(1207) in 16S rRNA + S-adenosyl-L-methionine = N(2)-methylguanosine(1207) in 16S rRNA + S-adenosyl-L-homocysteine + H(+). Functionally, specifically methylates the guanine in position 1207 of 16S rRNA in the 30S particle. The polypeptide is Ribosomal RNA small subunit methyltransferase C (Hamiltonella defensa subsp. Acyrthosiphon pisum (strain 5AT)).